The chain runs to 152 residues: MIYYLIALFVIAIDQLSKWFIVKNMELGASIPIIDNVLYITSHRNRGAAWGILENKMWFFYIITVVFVGFIVFYMKKYAKTDKLLGISLGLILGGAIGNFIDRVFRQEVVDFIHVYIFSYNYPVFNIADSALCIGVVLIIIQTLLEGKKMKE.

2 helical membrane-spanning segments follow: residues N55–M75 and L85–F105. Active-site residues include D111 and D129. A helical membrane pass occupies residues V124–L144.

This sequence belongs to the peptidase A8 family.

The protein localises to the cell membrane. It carries out the reaction Release of signal peptides from bacterial membrane prolipoproteins. Hydrolyzes -Xaa-Yaa-Zaa-|-(S,diacylglyceryl)Cys-, in which Xaa is hydrophobic (preferably Leu), and Yaa (Ala or Ser) and Zaa (Gly or Ala) have small, neutral side chains.. The protein operates within protein modification; lipoprotein biosynthesis (signal peptide cleavage). Functionally, this protein specifically catalyzes the removal of signal peptides from prolipoproteins. This chain is Lipoprotein signal peptidase, found in Bacillus cytotoxicus (strain DSM 22905 / CIP 110041 / 391-98 / NVH 391-98).